The primary structure comprises 346 residues: RNA-directed DNA methylation 4 (346 aa).

M1 is subject to N-acetylmethionine. 3 stretches are compositionally biased toward acidic residues: residues 253–268 (FCDG…EDSN), 278–312 (PEEE…DDEE), and 323–332 (GDDEFDDYAE). The segment at 253-346 (FCDGSDESDY…YSESDEEFES (94 aa)) is disordered.

This sequence belongs to the IWR1/SLC7A6OS family. In terms of assembly, interacts with NRPD1. Associates with Pol II and Pol V complexes.

In terms of biological role, probable regulatory factor for several RNA polymerases. Effector involved in facilitation of Pol V transcription as RNA scaffold and recruitment of silencing complex to target genomic sites. In Arabidopsis thaliana (Mouse-ear cress), this protein is RNA-directed DNA methylation 4 (RDM4).